Reading from the N-terminus, the 185-residue chain is Elongation factor P (185 aa).

It belongs to the elongation factor P family.

It localises to the cytoplasm. The protein operates within protein biosynthesis; polypeptide chain elongation. Its function is as follows. Involved in peptide bond synthesis. Stimulates efficient translation and peptide-bond synthesis on native or reconstituted 70S ribosomes in vitro. Probably functions indirectly by altering the affinity of the ribosome for aminoacyl-tRNA, thus increasing their reactivity as acceptors for peptidyl transferase. This is Elongation factor P from Oceanobacillus iheyensis (strain DSM 14371 / CIP 107618 / JCM 11309 / KCTC 3954 / HTE831).